An 872-amino-acid polypeptide reads, in one-letter code: Alanine--tRNA ligase (872 aa).

Residues His-567, His-571, Cys-669, and His-673 each contribute to the Zn(2+) site.

The protein belongs to the class-II aminoacyl-tRNA synthetase family. It depends on Zn(2+) as a cofactor.

Its subcellular location is the cytoplasm. It carries out the reaction tRNA(Ala) + L-alanine + ATP = L-alanyl-tRNA(Ala) + AMP + diphosphate. Catalyzes the attachment of alanine to tRNA(Ala) in a two-step reaction: alanine is first activated by ATP to form Ala-AMP and then transferred to the acceptor end of tRNA(Ala). Also edits incorrectly charged Ser-tRNA(Ala) and Gly-tRNA(Ala) via its editing domain. This is Alanine--tRNA ligase from Streptococcus mutans serotype c (strain ATCC 700610 / UA159).